The following is a 639-amino-acid chain: UvrABC system protein C (639 aa).

A GIY-YIG domain is found at 20–97 (ERSGVYRMFD…IKKFQPKFNI (78 aa)). Residues 207-242 (KELQENLSRKMEELSSQMRFEEAAEIRDRIKALSYV) form the UVR domain.

This sequence belongs to the UvrC family. In terms of assembly, interacts with UvrB in an incision complex.

It localises to the cytoplasm. Its function is as follows. The UvrABC repair system catalyzes the recognition and processing of DNA lesions. UvrC both incises the 5' and 3' sides of the lesion. The N-terminal half is responsible for the 3' incision and the C-terminal half is responsible for the 5' incision. The polypeptide is UvrABC system protein C (Rickettsia rickettsii (strain Iowa)).